The sequence spans 341 residues: Glycerol-3-phosphate dehydrogenase [NAD(P)+] (341 aa).

NADPH-binding residues include serine 14, phenylalanine 15, arginine 35, and lysine 108. Residues lysine 108 and glycine 136 each coordinate sn-glycerol 3-phosphate. Alanine 140 serves as a coordination point for NADPH. Sn-glycerol 3-phosphate is bound by residues lysine 191, aspartate 244, serine 254, arginine 255, and asparagine 256. The Proton acceptor role is filled by lysine 191. Arginine 255 is an NADPH binding site. The NADPH site is built by valine 279 and glutamate 281.

Belongs to the NAD-dependent glycerol-3-phosphate dehydrogenase family.

Its subcellular location is the cytoplasm. The enzyme catalyses sn-glycerol 3-phosphate + NAD(+) = dihydroxyacetone phosphate + NADH + H(+). It catalyses the reaction sn-glycerol 3-phosphate + NADP(+) = dihydroxyacetone phosphate + NADPH + H(+). The protein operates within membrane lipid metabolism; glycerophospholipid metabolism. In terms of biological role, catalyzes the reduction of the glycolytic intermediate dihydroxyacetone phosphate (DHAP) to sn-glycerol 3-phosphate (G3P), the key precursor for phospholipid synthesis. This chain is Glycerol-3-phosphate dehydrogenase [NAD(P)+], found in Pseudomonas savastanoi pv. phaseolicola (strain 1448A / Race 6) (Pseudomonas syringae pv. phaseolicola (strain 1448A / Race 6)).